The chain runs to 113 residues: Protein FMC1 homolog (113 aa).

The tract at residues 94–113 is disordered; it reads SAGLVGLQLPHQPGGKGWEP.

It belongs to the FMC1 family. As to quaternary structure, interacts with ATPAF2.

It localises to the mitochondrion. Functionally, plays a role in the assembly/stability of the mitochondrial membrane ATP synthase (F(1)F(0) ATP synthase or Complex V). The polypeptide is Protein FMC1 homolog (Rattus norvegicus (Rat)).